A 693-amino-acid polypeptide reads, in one-letter code: Auxin response factor 10 (693 aa).

The TF-B3 DNA-binding region spans 115–217 (FAKTLTQSDA…DLCVGIRRAK (103 aa)). Residues 580 to 668 (TGHCKVFMES…DIGGDNVRKT (89 aa)) form the PB1 domain.

It belongs to the ARF family. In terms of assembly, homodimers and heterodimers. Expressed in the whole plant.

It localises to the nucleus. Functionally, auxin response factors (ARFs) are transcriptional factors that bind specifically to the DNA sequence 5'-TGTCTC-3' found in the auxin-responsive promoter elements (AuxREs). Could act as transcriptional activator or repressor. Formation of heterodimers with Aux/IAA proteins may alter their ability to modulate early auxin response genes expression. The protein is Auxin response factor 10 (ARF10) of Arabidopsis thaliana (Mouse-ear cress).